Consider the following 61-residue polypeptide: Insect toxin BsIT2 (61 aa).

An LCN-type CS-alpha/beta domain is found at 1-61; it reads DGYIKKSKGC…RWKYETKTCK (61 aa). 4 disulfides stabilise this stretch: cysteine 10–cysteine 60, cysteine 14–cysteine 35, cysteine 21–cysteine 42, and cysteine 25–cysteine 44.

It belongs to the long (4 C-C) scorpion toxin superfamily. Sodium channel inhibitor family. Beta subfamily. In terms of tissue distribution, expressed by the venom gland.

Its subcellular location is the secreted. Depressant insect beta-toxins cause a transient contraction paralysis followed by a slow flaccid paralysis. They bind voltage-independently at site-4 of sodium channels (Nav) and shift the voltage of activation toward more negative potentials thereby affecting sodium channel activation and promoting spontaneous and repetitive firing. This toxin is active only on insects. The polypeptide is Insect toxin BsIT2 (Hottentotta tamulus sindicus (Scorpion)).